A 64-amino-acid chain; its full sequence is Alpha-conotoxin-like Lp1.8 (64 aa).

Positions 1-21 (MGMRMMFTMFLLVVLTTTVVS) are cleaved as a signal peptide. Positions 22–41 (FNSDRESNHENRRTSNQITR) are excised as a propeptide. 2 disulfides stabilise this stretch: C47–C53 and C48–C61. Residues 49-51 (KDP) are lacks the Ser-Xaa-Pro motif that is crucial for potent interaction with nAChR.

The protein belongs to the conotoxin A superfamily. Expressed by the venom duct.

Its subcellular location is the secreted. Functionally, alpha-conotoxins act on postsynaptic membranes, they bind to the nicotinic acetylcholine receptors (nAChR) and thus inhibit them. Has possibly a distinct nAChR binding mode from other alpha-conotoxins, due to a different three residue motif (Lys-Xaa-Pro instead of the conserved Ser-Xaa-Pro motif). This is Alpha-conotoxin-like Lp1.8 from Conus leopardus (Leopard cone).